Reading from the N-terminus, the 385-residue chain is S-adenosylmethionine synthase (385 aa).

His-16 lines the ATP pocket. Residue Asp-18 participates in Mg(2+) binding. Glu-44 is a binding site for K(+). The L-methionine site is built by Glu-57 and Gln-100. The segment at 100-110 (QSPDINQGVDR) is flexible loop. Residues 164–166 (DGK), 230–231 (KF), Asp-239, 245–246 (RK), Ala-262, and Lys-266 contribute to the ATP site. Residue Asp-239 participates in L-methionine binding. Lys-270 is a binding site for L-methionine.

Belongs to the AdoMet synthase family. As to quaternary structure, homotetramer; dimer of dimers. The cofactor is Mg(2+). It depends on K(+) as a cofactor.

The protein localises to the cytoplasm. It carries out the reaction L-methionine + ATP + H2O = S-adenosyl-L-methionine + phosphate + diphosphate. Its pathway is amino-acid biosynthesis; S-adenosyl-L-methionine biosynthesis; S-adenosyl-L-methionine from L-methionine: step 1/1. Functionally, catalyzes the formation of S-adenosylmethionine (AdoMet) from methionine and ATP. The overall synthetic reaction is composed of two sequential steps, AdoMet formation and the subsequent tripolyphosphate hydrolysis which occurs prior to release of AdoMet from the enzyme. This chain is S-adenosylmethionine synthase, found in Helicobacter pylori (strain P12).